A 158-amino-acid polypeptide reads, in one-letter code: Arginine repressor (158 aa).

Belongs to the ArgR family.

It localises to the cytoplasm. It functions in the pathway amino-acid biosynthesis; L-arginine biosynthesis [regulation]. In terms of biological role, regulates arginine biosynthesis genes. This chain is Arginine repressor, found in Anaeromyxobacter sp. (strain Fw109-5).